A 476-amino-acid polypeptide reads, in one-letter code: FAD-dependent monooxygenase ausM (476 aa).

FAD-binding residues include Glu-41, Gly-55, and Arg-114. Tyr-222 is a catalytic residue. FAD contacts are provided by Asp-314 and Ala-327. The helical transmembrane segment at Leu-447–Tyr-467 threads the bilayer.

Belongs to the paxM FAD-dependent monooxygenase family. The cofactor is FAD.

The protein localises to the membrane. Its pathway is secondary metabolite biosynthesis; terpenoid biosynthesis. In terms of biological role, FAD-dependent monooxygenase; part of the gene cluster A that mediates the biosynthesis of the fungal meroterpenoid acetoxydehydroaustin. The first step of the pathway is the synthesis of 3,5-dimethylorsellinic acid by the polyketide synthase ausA. 3,5-dimethylorsellinic acid is then prenylated by the polyprenyl transferase ausN. Further epoxidation by the FAD-dependent monooxygenase ausM and cyclization by the probable terpene cyclase ausL lead to the formation of protoaustinoid A. Protoaustinoid A is then oxidized to spiro-lactone preaustinoid A3 by the combined action of the FAD-binding monooxygenases ausB and ausC, and the dioxygenase ausE. Acid-catalyzed keto-rearrangement and ring contraction of the tetraketide portion of preaustinoid A3 by ausJ lead to the formation of preaustinoid A4. The aldo-keto reductase ausK, with the help of ausH, is involved in the next step by transforming preaustinoid A4 into isoaustinone which is in turn hydroxylated by the P450 monooxygenase ausI to form austinolide. The cytochrome P450 monooxygenase ausG then modifies austinolide to austinol. Austinol is further acetylated to austin by the O-acetyltransferase ausP, which spontaneously changes to dehydroaustin. The cytochrome P450 monooxygenase then converts dehydroaustin is into 7-dehydrodehydroaustin. The hydroxylation catalyzed by ausR permits the second O-acetyltransferase ausQ to add an additional acetyl group to the molecule, leading to the formation of acetoxydehydroaustin. Due to genetic rearrangements of the clusters and the subsequent loss of some enzymes, the end product of the Penicillium brasilianum austinoid biosynthesis clusters is acetoxydehydroaustin. The polypeptide is FAD-dependent monooxygenase ausM (Penicillium brasilianum).